The sequence spans 119 residues: Auxin-responsive protein SAUR78 (119 aa).

Belongs to the ARG7 family.

Its function is as follows. May be involved in the regulation of ethylene receptor signaling. Promotes cell expansion and plant growth. This chain is Auxin-responsive protein SAUR78, found in Arabidopsis thaliana (Mouse-ear cress).